A 356-amino-acid polypeptide reads, in one-letter code: MAATRSPTRARERERSGAPAAGSDQVHSWMLATSQALDTVWRMAKGFVMLAVSFLVAAICYFRRLHLYSGHKLKWWIGYLQRKFKRNLSVEAEVDLLSYCAREWKGETPRNKLMRKAYEELFWRHHIKCVRQVRRDNYDALRSVLFQIFSQGISFPSWMKEKDIVKLPEKLLFSQGCNWIQQYSFGPEKYTGSNVFGKLRKYVELLKTQWTEFNGIRDYHKRGSMCNTLFSDAILEYKLYEALKFIMLYQVTEVYEQMKTKKVIPSLFRLLFSRETSSDPLSFMMNHLNSVGDTCGLEQIDMFILGYSLEVKIKVFRLFKFNSRDFEVCYPEEPLRDWPEISLLTENDRHYHIPVF.

The disordered stretch occupies residues 1-22 (MAATRSPTRARERERSGAPAAG). Positions 1–83 (MAATRSPTRA…KWWIGYLQRK (83 aa)) are required for membrane binding. Residues 128-356 (KCVRQVRRDN…NDRHYHIPVF (229 aa)) enclose the OTU domain.

It belongs to the peptidase C65 family. Otulin subfamily. As to quaternary structure, does not bind ubiquitin or ubiquitin-like proteins.

It localises to the cytoplasm. It is found in the endoplasmic reticulum membrane. The protein localises to the nucleus envelope. Lacks deubiquitinase activity. The sequence is that of Inactive ubiquitin thioesterase OTULINL from Homo sapiens (Human).